Here is a 166-residue protein sequence, read N- to C-terminus: Photosystem I assembly protein Ycf3 (166 aa).

TPR repeat units follow at residues 35–68 (AFTY…EIDA), 72–105 (SYML…NPRL), and 120–153 (GEQA…SPTS).

The protein belongs to the Ycf3 family.

Its subcellular location is the plastid. The protein localises to the chloroplast thylakoid membrane. In terms of biological role, essential for the assembly of the photosystem I (PSI) complex. May act as a chaperone-like factor to guide the assembly of the PSI subunits. The sequence is that of Photosystem I assembly protein Ycf3 from Bigelowiella natans (Pedinomonas minutissima).